The primary structure comprises 252 residues: uncharacterized protein (252 aa).

The HTH deoR-type domain maps to 3-58; that stretch reads AKDRIQAIKQMVANDKKVTVSNLSGIFQVTEETIRRDLEKLEDEGFLTRTYGGAVL. A DNA-binding region (H-T-H motif) is located at residues 20-39; it reads VTVSNLSGIFQVTEETIRRD.

This is an uncharacterized protein from Escherichia coli (strain K12).